The sequence spans 245 residues: Ribonuclease 3 (245 aa).

The RNase III domain occupies 19–148 (FKVFQEKIGI…FIGALYLDQG (130 aa)). Residue E61 participates in Mg(2+) binding. The active site involves D65. Mg(2+) contacts are provided by D134 and E137. E137 is a catalytic residue. The 70-residue stretch at 174-243 (DYKSQLQELI…AAEALKKLKE (70 aa)) folds into the DRBM domain.

It belongs to the ribonuclease III family. In terms of assembly, homodimer. The cofactor is Mg(2+).

Its subcellular location is the cytoplasm. It catalyses the reaction Endonucleolytic cleavage to 5'-phosphomonoester.. Its function is as follows. Digests double-stranded RNA. Involved in the processing of primary rRNA transcript to yield the immediate precursors to the large and small rRNAs (23S and 16S). Processes some mRNAs, and tRNAs when they are encoded in the rRNA operon. Processes pre-crRNA and tracrRNA of type II CRISPR loci if present in the organism. This chain is Ribonuclease 3, found in Bacillus cereus (strain AH187).